The chain runs to 4471 residues: Dynein axonemal heavy chain 10 (4471 aa).

The segment at 1-1793 (MVPEEVEVEI…NIRQCTGTFG (1793 aa)) is stem. The disordered stretch occupies residues 46-65 (TESLGQPLNREDEEMDKEIS). 4 coiled-coil regions span residues 203–223 (NVQK…GEIK), 602–622 (QEVK…EDRK), 1071–1106 (KLLN…EDLK), and 1217–1245 (VELL…KLFD). A glycan (N-linked (GlcNAc...) asparagine) is linked at Asn-1074. One copy of the TPR 1 repeat lies at 1221–1254 (GVYERELARHEKSRQELANAEKLFDLPITMYPEL). AAA stretches follow at residues 1794 to 2015 (YGYE…VLVM), 2075 to 2294 (DAVE…VIVE), 2417 to 2665 (IHAP…VFNG), and 2765 to 3014 (EYNE…LRRS). Residues 1832–1839 (GPAGTGKT) carry the GPAGTGKT motif motif. 1832-1839 (GPAGTGKT) serves as a coordination point for ATP. Residues 1882–1888 (CFDEFNR) carry the CFDEFNR motif motif. ATP-binding positions include 2113-2120 (GPTRGGKS) and 2455-2462 (GESGTSKT). TPR repeat units follow at residues 2736–2769 (MALH…YNES) and 2771–2797 (TKMN…MDRG). Residues 2747–2770 (EDIQDYEAAKALFQEILEEYNESN) adopt a coiled-coil conformation. Position 2803–2810 (2803–2810 (GVGGSGKQ)) interacts with ATP. Residues 3029-3313 (YSKLLDEKTQ…QKLQEEAEIM (285 aa)) form a stalk region. 3 coiled-coil regions span residues 3045–3131 (KRLD…LAEV), 3257–3327 (KREK…ISGL), and 3567–3638 (ERRE…EKTA). The AAA 5 stretch occupies residues 3399 to 3629 (LTDDVEISRW…TKSKATEVSE (231 aa)). Residues 3802–3837 (WQEWYDLDSLEQFPVPLGYDNNITPFQKLLILRCFR) form a TPR 4 repeat. Residues 3845-4062 (VTDYVTVTMG…FQVCMEILNT (218 aa)) are AAA 6. A TPR 5 repeat occupies 4074-4108 (RIPWGSLKYLIGEVMYGGRAIDSFDRRILTIYMDE). Positions 4235-4260 (LLQELERFNKLVVRMTKSLAELQRAL) form a coiled coil.

Belongs to the dynein heavy chain family. Consists of at least two heavy chains and a number of intermediate and light chains. In terms of tissue distribution, expressed primarily in trachea and testis, 2 tissues containing axonemal structures. Also expressed in brain but not in adult heart.

Its subcellular location is the cytoplasm. It is found in the cytoskeleton. The protein localises to the cilium axoneme. Functionally, force generating protein of respiratory cilia. Produces force towards the minus ends of microtubules. Dynein has ATPase activity; the force-producing power stroke is thought to occur on release of ADP. Involved in sperm motility; implicated in sperm flagellar assembly. Probable inner arm dynein heavy chain. This chain is Dynein axonemal heavy chain 10 (DNAH10), found in Homo sapiens (Human).